The primary structure comprises 194 residues: 5'-deoxynucleotidase VV1113 (194 aa).

Residues 18–19 (RW) and H33 contribute to the substrate site. The region spanning 30–142 (VSEHSLQVAF…VKQADSICAY (113 aa)) is the HD domain. A divalent metal cation-binding residues include H33, H68, and D69. Substrate-binding positions include D69, 77–80 (DLPT), and D137. D137 lines the a divalent metal cation pocket.

Belongs to the 5DNU family. In terms of assembly, homodimer. It depends on a divalent metal cation as a cofactor.

Its subcellular location is the cytoplasm. It catalyses the reaction a 2'-deoxyribonucleoside 5'-phosphate + H2O = a 2'-deoxyribonucleoside + phosphate. Its function is as follows. Catalyzes the strictly specific dephosphorylation of 2'-deoxyribonucleoside 5'-monophosphates. This is 5'-deoxynucleotidase VV1113 from Vibrio vulnificus (strain YJ016).